The sequence spans 150 residues: Protein ADM2 (150 aa).

Residues 1 to 25 form the signal peptide; that stretch reads MAQLLMVTVTLGCISLLYLLPGTLS. Residues 26–100 constitute a propeptide that is removed on maturation; it reads GSLGKGLRHS…HPGPQRPTGS (75 aa). A disordered region spans residues 28–102; it reads LGKGLRHSRP…GPQRPTGSRR (75 aa). A disulfide bridge connects residues Cys-112 and Cys-117. Tyr-149 carries the post-translational modification Tyrosine amide.

Belongs to the adrenomedullin family. High expression detected in the submaxillary gland, kidney, stomach, and mesentery, followed by the pituitary, lung, pancreas, intestines, spleen, thymus and ovary. Expressed mainly in the intermediate lobe of the pituitary, with sporadic in the anterior lobe.

It is found in the secreted. Functionally, intermedin/ADM2 is a peptide hormone that plays a role as physiological regulator of gastrointestinal and cardiovascular bioactivities mediated by the CALCRL-RAMPs receptor complexes. Activates the cAMP-dependent pathway through interaction with CALCRL-RAMP3 receptor complex. This is Protein ADM2 from Mus musculus (Mouse).